The following is a 148-amino-acid chain: SsrA-binding protein (148 aa).

Residues 127–142 (KRESEKERDWERDKAR) show a composition bias toward basic and acidic residues. The segment at 127 to 148 (KRESEKERDWERDKARLMRVKT) is disordered.

This sequence belongs to the SmpB family.

It localises to the cytoplasm. Its function is as follows. Required for rescue of stalled ribosomes mediated by trans-translation. Binds to transfer-messenger RNA (tmRNA), required for stable association of tmRNA with ribosomes. tmRNA and SmpB together mimic tRNA shape, replacing the anticodon stem-loop with SmpB. tmRNA is encoded by the ssrA gene; the 2 termini fold to resemble tRNA(Ala) and it encodes a 'tag peptide', a short internal open reading frame. During trans-translation Ala-aminoacylated tmRNA acts like a tRNA, entering the A-site of stalled ribosomes, displacing the stalled mRNA. The ribosome then switches to translate the ORF on the tmRNA; the nascent peptide is terminated with the 'tag peptide' encoded by the tmRNA and targeted for degradation. The ribosome is freed to recommence translation, which seems to be the essential function of trans-translation. This is SsrA-binding protein from Aromatoleum aromaticum (strain DSM 19018 / LMG 30748 / EbN1) (Azoarcus sp. (strain EbN1)).